A 132-amino-acid polypeptide reads, in one-letter code: uncharacterized protein (132 aa).

This is an uncharacterized protein from Saccharomyces cerevisiae (strain ATCC 204508 / S288c) (Baker's yeast).